The chain runs to 346 residues: Holliday junction branch migration complex subunit RuvB (346 aa).

The segment at threonine 4 to tyrosine 184 is large ATPase domain (RuvB-L). Residues arginine 24, glycine 65, lysine 68, threonine 69, threonine 70, glutamate 131 to phenylalanine 133, arginine 174, tyrosine 184, and arginine 221 contribute to the ATP site. Threonine 69 lines the Mg(2+) pocket. The interval asparagine 185–asparagine 255 is small ATPAse domain (RuvB-S). The head domain (RuvB-H) stretch occupies residues glutamate 258–alanine 346. The DNA site is built by arginine 294, arginine 313, and arginine 318.

It belongs to the RuvB family. In terms of assembly, homohexamer. Forms an RuvA(8)-RuvB(12)-Holliday junction (HJ) complex. HJ DNA is sandwiched between 2 RuvA tetramers; dsDNA enters through RuvA and exits via RuvB. An RuvB hexamer assembles on each DNA strand where it exits the tetramer. Each RuvB hexamer is contacted by two RuvA subunits (via domain III) on 2 adjacent RuvB subunits; this complex drives branch migration. In the full resolvosome a probable DNA-RuvA(4)-RuvB(12)-RuvC(2) complex forms which resolves the HJ.

The protein resides in the cytoplasm. The enzyme catalyses ATP + H2O = ADP + phosphate + H(+). Its function is as follows. The RuvA-RuvB-RuvC complex processes Holliday junction (HJ) DNA during genetic recombination and DNA repair, while the RuvA-RuvB complex plays an important role in the rescue of blocked DNA replication forks via replication fork reversal (RFR). RuvA specifically binds to HJ cruciform DNA, conferring on it an open structure. The RuvB hexamer acts as an ATP-dependent pump, pulling dsDNA into and through the RuvAB complex. RuvB forms 2 homohexamers on either side of HJ DNA bound by 1 or 2 RuvA tetramers; 4 subunits per hexamer contact DNA at a time. Coordinated motions by a converter formed by DNA-disengaged RuvB subunits stimulates ATP hydrolysis and nucleotide exchange. Immobilization of the converter enables RuvB to convert the ATP-contained energy into a lever motion, pulling 2 nucleotides of DNA out of the RuvA tetramer per ATP hydrolyzed, thus driving DNA branch migration. The RuvB motors rotate together with the DNA substrate, which together with the progressing nucleotide cycle form the mechanistic basis for DNA recombination by continuous HJ branch migration. Branch migration allows RuvC to scan DNA until it finds its consensus sequence, where it cleaves and resolves cruciform DNA. This is Holliday junction branch migration complex subunit RuvB from Cellvibrio japonicus (strain Ueda107) (Pseudomonas fluorescens subsp. cellulosa).